The chain runs to 147 residues: Hemoglobin subunit beta (147 aa).

The residue at position 2 (V2) is an N-acetylvaline. The Globin domain occupies 3–147; sequence HLTGEEKAAV…VANALAHKYH (145 aa). T13 is modified (phosphothreonine). The residue at position 45 (S45) is a Phosphoserine. K60 is subject to N6-acetyllysine. Heme b is bound at residue H64. At K83 the chain carries N6-acetyllysine. Heme b is bound at residue H93. The residue at position 94 (C94) is an S-nitrosocysteine. Residue K145 is modified to N6-acetyllysine.

It belongs to the globin family. As to quaternary structure, heterotetramer of two alpha chains and two beta chains. In terms of tissue distribution, red blood cells.

Its function is as follows. Involved in oxygen transport from the lung to the various peripheral tissues. The chain is Hemoglobin subunit beta (HBB) from Lagothrix lagotricha (Brown woolly monkey).